Consider the following 155-residue polypeptide: SsrA-binding protein (155 aa).

Positions 132–147 are enriched in basic and acidic residues; it reads KRESIKRREQDRDIKR. Residues 132–155 form a disordered region; sequence KRESIKRREQDRDIKRQMKQFNGR.

The protein belongs to the SmpB family.

The protein localises to the cytoplasm. In terms of biological role, required for rescue of stalled ribosomes mediated by trans-translation. Binds to transfer-messenger RNA (tmRNA), required for stable association of tmRNA with ribosomes. tmRNA and SmpB together mimic tRNA shape, replacing the anticodon stem-loop with SmpB. tmRNA is encoded by the ssrA gene; the 2 termini fold to resemble tRNA(Ala) and it encodes a 'tag peptide', a short internal open reading frame. During trans-translation Ala-aminoacylated tmRNA acts like a tRNA, entering the A-site of stalled ribosomes, displacing the stalled mRNA. The ribosome then switches to translate the ORF on the tmRNA; the nascent peptide is terminated with the 'tag peptide' encoded by the tmRNA and targeted for degradation. The ribosome is freed to recommence translation, which seems to be the essential function of trans-translation. The protein is SsrA-binding protein of Streptococcus mutans serotype c (strain ATCC 700610 / UA159).